The primary structure comprises 435 residues: Elongation factor 1-alpha (435 aa).

The 224-residue stretch at 4–227 (KPHLNLIVIG…YLDQLELPPK (224 aa)) folds into the tr-type G domain. The interval 13 to 20 (GHIDHGKS) is G1. A GTP-binding site is contributed by 13 to 20 (GHIDHGKS). Ser20 lines the Mg(2+) pocket. A G2 region spans residues 69–73 (GVTIN). Residues 90 to 93 (DAPG) are G3. GTP-binding positions include 90-94 (DAPGH) and 152-155 (NKMD). The interval 152-155 (NKMD) is G4. Residues 193–195 (VAP) form a G5 region.

It belongs to the TRAFAC class translation factor GTPase superfamily. Classic translation factor GTPase family. EF-Tu/EF-1A subfamily.

The protein localises to the cytoplasm. The catalysed reaction is GTP + H2O = GDP + phosphate + H(+). In terms of biological role, GTP hydrolase that promotes the GTP-dependent binding of aminoacyl-tRNA to the A-site of ribosomes during protein biosynthesis. The polypeptide is Elongation factor 1-alpha (Saccharolobus solfataricus (strain ATCC 35092 / DSM 1617 / JCM 11322 / P2) (Sulfolobus solfataricus)).